Here is a 148-residue protein sequence, read N- to C-terminus: MVDWTDAERSAIVGLWGKISVDEIGPQALARLLIVSPWTQRHFSTFGNLSTPAAIMGNPAVAKHGKTVMHGLDRAVQNLDDIKNTYAALSVMHSEKLHVDPDNFRLLADCITVCVAAKLGPAVFNADTQEAFQKFLAVVVSALGRQYH.

The Globin domain maps to 3–148; sequence DWTDAERSAI…VVSALGRQYH (146 aa). Residues H64 and H93 each coordinate heme b.

This sequence belongs to the globin family. In terms of assembly, heterotetramer of two alpha chains and two beta chains. Red blood cells.

Functionally, involved in oxygen transport from gills to the various peripheral tissues. This Oncorhynchus nerka (Sockeye salmon) protein is Hemoglobin subunit beta (hbb).